We begin with the raw amino-acid sequence, 241 residues long: Glucosamine-6-phosphate deaminase (241 aa).

Residue Asp-67 is the Proton acceptor; for enolization step of the active site. Asn-136 functions as the For ring-opening step in the catalytic mechanism. His-138 acts as the Proton acceptor; for ring-opening step in catalysis. The active-site For ring-opening step is Glu-143.

It belongs to the glucosamine/galactosamine-6-phosphate isomerase family. NagB subfamily.

The catalysed reaction is alpha-D-glucosamine 6-phosphate + H2O = beta-D-fructose 6-phosphate + NH4(+). Its pathway is amino-sugar metabolism; N-acetylneuraminate degradation; D-fructose 6-phosphate from N-acetylneuraminate: step 5/5. Catalyzes the reversible isomerization-deamination of glucosamine 6-phosphate (GlcN6P) to form fructose 6-phosphate (Fru6P) and ammonium ion. The chain is Glucosamine-6-phosphate deaminase from Halothermothrix orenii (strain H 168 / OCM 544 / DSM 9562).